The chain runs to 213 residues: MSADIRFDSLKTIVPAVSRETADRLIAFEDLFRKWSKAINLASPSTLADLWNRHILDSAQLFPLAKEATRWLDIGSGGGFPGIVTACFLAERSGGCIDLVESAGKKAAFLRTAAGHLHVPARVHSARIESMWEKIETPQVVTARALASLGDLFTLAEPWLSDGAKALFQKGRDYQREIDESRVGWSFDLVKHPSAIDQASVILEISNLRRKTD.

Residues glycine 75, phenylalanine 80, 128 to 129, and arginine 144 each bind S-adenosyl-L-methionine; that span reads IE.

Belongs to the methyltransferase superfamily. RNA methyltransferase RsmG family.

Its subcellular location is the cytoplasm. The enzyme catalyses guanosine(527) in 16S rRNA + S-adenosyl-L-methionine = N(7)-methylguanosine(527) in 16S rRNA + S-adenosyl-L-homocysteine. In terms of biological role, specifically methylates the N7 position of guanine in position 527 of 16S rRNA. This is Ribosomal RNA small subunit methyltransferase G from Brucella abortus (strain S19).